The chain runs to 156 residues: MADVHDKATRSKNMRAIATRDTAIEKRLASLLTGQGLAFRVQDASLPGRPDFVVDEYRCVIFTHGCFWHHHHCYLFKVPATRTEFWLEKIGKNVERDRRDISRLQELGWRVLIVWECALRGREKLTDEALTERLEEWICGEGASAQIDTQGIHLLA.

Mg(2+) contacts are provided by Asp51 and Thr63.

It belongs to the Vsr family. Requires Mg(2+) as cofactor. It depends on Zn(2+) as a cofactor.

In terms of biological role, deamination of 5-methylcytosine in DNA results in T/G mismatches. If unrepaired, these mismatches can lead to C-to-T transition mutations. The very short patch (VSP) repair process in E.coli counteracts the mutagenic process by repairing the mismatches in favor of the G-containing strand. This enzyme is an endonuclease that nicks double-stranded DNA within the sequence CT(AT)GN or NT(AT)GG next to the thymidine residue that is mismatched to 2'-deoxyguanosine. The incision is mismatch-dependent and strand-specific. This chain is DNA mismatch endonuclease Vsr, found in Escherichia coli (strain K12).